A 414-amino-acid chain; its full sequence is L-cysteine:1D-myo-inositol 2-amino-2-deoxy-alpha-D-glucopyranoside ligase (414 aa).

Cysteine 43 is a Zn(2+) binding site. L-cysteinyl-5'-AMP contacts are provided by residues 43–46 (CGIT), threonine 58, and 81–83 (NIT). The 'HIGH' region signature appears at 45–55 (ITPYDATHLGH). Residues 189–194 (ERGGDP) carry the 'ERGGDP' region motif. An L-cysteinyl-5'-AMP-binding site is contributed by tryptophan 229. Residue cysteine 233 participates in Zn(2+) binding. An L-cysteinyl-5'-AMP-binding site is contributed by 251-253 (GSD). Residue histidine 258 coordinates Zn(2+). Residue isoleucine 285 coordinates L-cysteinyl-5'-AMP. The short motif at 291 to 295 (KMSKS) is the 'KMSKS' region element.

It belongs to the class-I aminoacyl-tRNA synthetase family. MshC subfamily. Monomer. The cofactor is Zn(2+).

It catalyses the reaction 1D-myo-inositol 2-amino-2-deoxy-alpha-D-glucopyranoside + L-cysteine + ATP = 1D-myo-inositol 2-(L-cysteinylamino)-2-deoxy-alpha-D-glucopyranoside + AMP + diphosphate + H(+). Its function is as follows. Catalyzes the ATP-dependent condensation of GlcN-Ins and L-cysteine to form L-Cys-GlcN-Ins. The polypeptide is L-cysteine:1D-myo-inositol 2-amino-2-deoxy-alpha-D-glucopyranoside ligase (mshC) (Mycobacterium bovis (strain ATCC BAA-935 / AF2122/97)).